Here is a 275-residue protein sequence, read N- to C-terminus: 4-diphosphocytidyl-2-C-methyl-D-erythritol kinase (275 aa).

Lys15 is a catalytic residue. 97-107 (PMGSGLGGGSS) serves as a coordination point for ATP. Asp137 is an active-site residue.

The protein belongs to the GHMP kinase family. IspE subfamily.

The catalysed reaction is 4-CDP-2-C-methyl-D-erythritol + ATP = 4-CDP-2-C-methyl-D-erythritol 2-phosphate + ADP + H(+). Its pathway is isoprenoid biosynthesis; isopentenyl diphosphate biosynthesis via DXP pathway; isopentenyl diphosphate from 1-deoxy-D-xylulose 5-phosphate: step 3/6. In terms of biological role, catalyzes the phosphorylation of the position 2 hydroxy group of 4-diphosphocytidyl-2C-methyl-D-erythritol. In Pseudothermotoga lettingae (strain ATCC BAA-301 / DSM 14385 / NBRC 107922 / TMO) (Thermotoga lettingae), this protein is 4-diphosphocytidyl-2-C-methyl-D-erythritol kinase.